The primary structure comprises 5488 residues: Polyketide synthase PksN (5488 aa).

The interval 3-301 (RQLKSPLSEG…NMMAVRSKNI (299 aa)) is condensation. One copy of the WD 1 repeat lies at 165-205 (QQPSTADYYDFVDWENRMLTGREGEEHLAYWKEQLSGSLPV). Residues 493–903 (TYKEVDEKST…EFPGILDQAV (411 aa)) form an adenylation region. A WD 2 repeat occupies 965-1006 (RKELEKREIVFNRRKPNHLQLTEIEDQVLRIWEETLKVSGFG). Residues 983–1058 (LQLTEIEDQV…AISEYILEMK (76 aa)) enclose the Carrier 1 domain. At serine 1018 the chain carries O-(pantetheine 4'-phosphoryl)serine. The region spanning 1089–1515 (DDSVAIVGIS…GTNAHAIFEQ (427 aa)) is the Ketosynthase family 3 (KS3) 1 domain. Residues cysteine 1261, histidine 1397, and histidine 1437 each act as for beta-ketoacyl synthase 1 activity in the active site. The N-terminal hotdog fold 1 stretch occupies residues 1700–1826 (HPLVHHNTSV…GKAELIQLKR (127 aa)). A PKS/mFAS DH 1 domain is found at 1700 to 1992 (HPLVHHNTSV…TRVMEADIQT (293 aa)). The active-site Proton acceptor; for dehydratase activity 1 is histidine 1729. The interval 1840-1992 (DQSKMDAASF…TRVMEADIQT (153 aa)) is C-terminal hotdog fold 1. Residue aspartate 1900 is the Proton donor; for dehydratase activity 1 of the active site. The WD 3 repeat unit spans residues 2165-2204 (KQAKGDGSKPWKDNGVYLISGGAGGLGHIFAKEIAEQTKN). Residues 2448–2525 (SLLDKVKAML…AFGKHLSEEY (78 aa)) form the Carrier 2 domain. Serine 2485 is modified (O-(pantetheine 4'-phosphoryl)serine). Residues 2576 to 3012 (PEPIAIVGIS…GVNAHVIIEE (437 aa)) enclose the Ketosynthase family 3 (KS3) 2 domain. Active-site for beta-ketoacyl synthase 2 activity residues include cysteine 2747, histidine 2882, and histidine 2928. Residues 3038–3109 (KNEARLKEHA…AAEKSGVEDV (72 aa)) adopt a coiled-coil conformation. Residues 3207–3332 (HPLMHQNTSN…GSAVLNPAEN (126 aa)) are N-terminal hotdog fold 2. A PKS/mFAS DH 2 domain is found at 3207-3492 (HPLMHQNTSN…FRAAEGGSGS (286 aa)). Residue histidine 3236 is the Proton acceptor; for dehydratase activity 2 of the active site. The C-terminal hotdog fold 2 stretch occupies residues 3346-3492 (QESHFSVNEV…FRAAEGGSGS (147 aa)). Residue aspartate 3408 is the Proton donor; for dehydratase activity 2 of the active site. A coiled-coil region spans residues 3626–3655 (DSHENVESVIEKLKENKRHTEDQHIKYEKG). A WD 4 repeat occupies 3666-3705 (QIDDREISMPWRDKGVYLITGGAGGLGFIFAKEIARQAEQ). One can recognise a Carrier 3 domain in the interval 3952-4026 (DHIQEVLKQT…AFAGYLSEEY (75 aa)). The residue at position 3986 (serine 3986) is an O-(pantetheine 4'-phosphoryl)serine. One can recognise a Ketosynthase family 3 (KS3) 3 domain in the interval 4076-4511 (PEPIAIVGMS…GVNAHVVIEE (436 aa)). Residues cysteine 4245, histidine 4380, and histidine 4427 each act as for beta-ketoacyl synthase 3 activity in the active site. Positions 4706-4830 (HPLIHVNTSD…GSASIRGAGD (125 aa)) are N-terminal hotdog fold 3. Positions 4706–4988 (HPLIHVNTSD…SRLLEEGIQP (283 aa)) constitute a PKS/mFAS DH 3 domain. The active-site Proton acceptor; for dehydratase activity 3 is histidine 4735. Residues 4844 to 4988 (SLSTLSHDQC…SRLLEEGIQP (145 aa)) are C-terminal hotdog fold 3. Aspartate 4906 functions as the Proton donor; for dehydratase activity 3 in the catalytic mechanism. Residues 5206-5244 (HNNQPVHTKYKHGGVYVVIGGAGGIGEAWSEYMIRTYQA) form a WD 5 repeat. Positions 5275-5303 (IQADAANREELERAYETMKQTHREINGII) form a coiled coil.

The protein belongs to the ATP-dependent AMP-binding enzyme family. It depends on pantetheine 4'-phosphate as a cofactor.

It is found in the cytoplasm. Its pathway is antibiotic biosynthesis; bacillaene biosynthesis. Involved in some intermediate steps for the synthesis of the antibiotic polyketide bacillaene which is involved in secondary metabolism. The polypeptide is Polyketide synthase PksN (pksN) (Bacillus subtilis (strain 168)).